The sequence spans 94 residues: Phosphoribosyl-ATP pyrophosphatase (94 aa).

It belongs to the PRA-PH family.

The protein localises to the cytoplasm. It catalyses the reaction 1-(5-phospho-beta-D-ribosyl)-ATP + H2O = 1-(5-phospho-beta-D-ribosyl)-5'-AMP + diphosphate + H(+). It functions in the pathway amino-acid biosynthesis; L-histidine biosynthesis; L-histidine from 5-phospho-alpha-D-ribose 1-diphosphate: step 2/9. The protein is Phosphoribosyl-ATP pyrophosphatase (hisE) of Sulfurisphaera tokodaii (strain DSM 16993 / JCM 10545 / NBRC 100140 / 7) (Sulfolobus tokodaii).